Consider the following 519-residue polypeptide: MGLMIFAYIAIGAVLGAGTGYLLHRYVSAKRIGDANELAKRIVEEARKEAQAQKKEILLQGQDEIFNQKRELENEFKERERELKARDRKLEEQGERLEEKLEKATQKEHEVLAIEKELTRKERRLATLEEELEGKIAEQDHRLEEVSGLTAEEARARIMEEVEARTRHESAKMIRVIEMEARETADRKAKEILASAIQRYAGDYVGEQTVTAVTLPSEDMKGRIIGREGRNIRALEAATGVDLIIDDTPETVILSAYSPLRRQVAKMALERLIQDGRIHPARIEDIVRKCEQELEVQVREVGEQATFDAGVHGIHPDIIKLLGQLRYRTSFSQNVLQHSLEVSALCGMMAAELGMDIKKAKRAGLLHDIGKAVDHEVEGPHALIGADIAKKYGEGKDIIHAIAAHHEDQPPKTALAVLVQAADSISGARPGARKELLENYVKRLEDLENIATGFEGVSKVYAIQAGREIRVMVNSENVDDDQTYMLCKDIAAKIEKNLTYPGQIRVTVIRERRAVGYAK.

The chain crosses the membrane as a helical span at residues 3 to 23; the sequence is LMIFAYIAIGAVLGAGTGYLL. Positions 209-272 constitute a KH domain; that stretch reads TVTAVTLPSE…QVAKMALERL (64 aa). The HD domain occupies 335–428; that stretch reads VLQHSLEVSA…VQAADSISGA (94 aa).

Belongs to the RNase Y family.

Its subcellular location is the cell membrane. Endoribonuclease that initiates mRNA decay. The chain is Ribonuclease Y from Nitratidesulfovibrio vulgaris (strain ATCC 29579 / DSM 644 / CCUG 34227 / NCIMB 8303 / VKM B-1760 / Hildenborough) (Desulfovibrio vulgaris).